The sequence spans 331 residues: MARMYYDEDGNLDLLANKTVAIIGYGSQGHAHALNLKDSGIDVIVGLYPGSKSAKKAEEAGLTVHSVADAAAKADWIMILLPDEVQKSVYKQEIEPHLKEGKVLSFAHGFNIHFGQIVPPPTVDVVMVAPKGPGHLVRRTYTQGEGVPCLFAVFQDASGQARDRAMAYAKGIGGTRAGILETSFREETETDLFGEQVVLCGGLSALIKAGFQTLVDAGYQPELAYFECLHEVKLIVDLIVEGGLANMRDSISNTAEYGDYTRGPRIVTDETRAEMRKILQEIQSGQFAREFVLENQSGKPGFTAMRRQEAEHPIEEVGKDLRAMFSWLKKA.

The KARI N-terminal Rossmann domain occupies 2–182; the sequence is ARMYYDEDGN…GGTRAGILET (181 aa). Residues 25–28, Ser-51, Ser-53, and 83–86 each bind NADP(+); these read YGSQ and DEVQ. His-108 is a catalytic residue. An NADP(+)-binding site is contributed by Gly-134. Positions 183-328 constitute a KARI C-terminal knotted domain; the sequence is SFREETETDL…KDLRAMFSWL (146 aa). Mg(2+) is bound by residues Asp-191, Glu-195, Glu-227, and Glu-231. Ser-252 lines the substrate pocket.

It belongs to the ketol-acid reductoisomerase family. It depends on Mg(2+) as a cofactor.

The catalysed reaction is (2R)-2,3-dihydroxy-3-methylbutanoate + NADP(+) = (2S)-2-acetolactate + NADPH + H(+). It carries out the reaction (2R,3R)-2,3-dihydroxy-3-methylpentanoate + NADP(+) = (S)-2-ethyl-2-hydroxy-3-oxobutanoate + NADPH + H(+). Its pathway is amino-acid biosynthesis; L-isoleucine biosynthesis; L-isoleucine from 2-oxobutanoate: step 2/4. The protein operates within amino-acid biosynthesis; L-valine biosynthesis; L-valine from pyruvate: step 2/4. Its function is as follows. Involved in the biosynthesis of branched-chain amino acids (BCAA). Catalyzes an alkyl-migration followed by a ketol-acid reduction of (S)-2-acetolactate (S2AL) to yield (R)-2,3-dihydroxy-isovalerate. In the isomerase reaction, S2AL is rearranged via a Mg-dependent methyl migration to produce 3-hydroxy-3-methyl-2-ketobutyrate (HMKB). In the reductase reaction, this 2-ketoacid undergoes a metal-dependent reduction by NADPH to yield (R)-2,3-dihydroxy-isovalerate. This is Ketol-acid reductoisomerase (NADP(+)) from Gloeothece citriformis (strain PCC 7424) (Cyanothece sp. (strain PCC 7424)).